We begin with the raw amino-acid sequence, 1495 residues long: Pregnancy zone protein (1495 aa).

The first 24 residues, 1–24 (MRRNQLPTPAFLLLFLLLPRDATT), serve as a signal peptide directing secretion. A disulfide bridge connects residues cysteine 48 and cysteine 86. Asparagine 55 and asparagine 157 each carry an N-linked (GlcNAc...) asparagine glycan. Intrachain disulfides connect cysteine 249–cysteine 298 and cysteine 267–cysteine 286. Asparagine 382, asparagine 405, and asparagine 412 each carry an N-linked (GlcNAc...) asparagine glycan. Cysteine 469 and cysteine 562 are disulfide-bonded. Asparagine 568 carries N-linked (GlcNAc...) asparagine glycosylation. Intrachain disulfides connect cysteine 594-cysteine 783, cysteine 642-cysteine 689, cysteine 833-cysteine 861, cysteine 859-cysteine 895, cysteine 933-cysteine 1339, and cysteine 1092-cysteine 1140. A bait region region spans residues 686-744 (PRFCQEFQHYPAMGGVAPQALAVAASGPGSSFRAMGVPMMGLDYSDEINQVVEVRETVR). 2 N-linked (GlcNAc...) asparagine glycosylation sites follow: asparagine 881 and asparagine 942. The segment at residues 984-987 (CGEQ) is a cross-link (isoglutamyl cysteine thioester (Cys-Gln)). N-linked (GlcNAc...) asparagine glycosylation occurs at asparagine 1003. Asparagine 1385 and asparagine 1443 each carry an N-linked (GlcNAc...) asparagine glycan.

This sequence belongs to the protease inhibitor I39 (alpha-2-macroglobulin) family. As to expression, highest expression in liver, medium expression in ovary, heart and stomach. Low expression in lung, kidney and uterus. Protein found in plasma.

The protein resides in the secreted. In terms of biological role, is able to inhibit all four classes of proteinases by a unique 'trapping' mechanism. This protein has a peptide stretch, called the 'bait region' which contains specific cleavage sites for different proteinases. When a proteinase cleaves the bait region, a conformational change is induced in the protein which traps the proteinase. The entrapped enzyme remains active against low molecular weight substrates (activity against high molecular weight substrates is greatly reduced). Following cleavage in the bait region, a thioester bond is hydrolyzed and mediates the covalent binding of the protein to the proteinase. The protein is Pregnancy zone protein (Pzp) of Mus musculus (Mouse).